Consider the following 450-residue polypeptide: Methionine aminopeptidase 2-2 (450 aa).

2 stretches are compositionally biased toward basic and acidic residues: residues Met1–Pro10 and Arg30–Asp39. A disordered region spans residues Met1 to Phe100. The segment covering Gly47–Gly56 has biased composition (acidic residues). Over residues Lys69–Thr86 the composition is skewed to basic residues. His211 contributes to the substrate binding site. Asp232, Asp243, and His302 together coordinate a divalent metal cation. Substrate is bound at residue His310. Glu335 and Glu431 together coordinate a divalent metal cation.

It belongs to the peptidase M24A family. Methionine aminopeptidase eukaryotic type 2 subfamily. It depends on Co(2+) as a cofactor. The cofactor is Zn(2+). Requires Mn(2+) as cofactor. Fe(2+) serves as cofactor.

It localises to the cytoplasm. The enzyme catalyses Release of N-terminal amino acids, preferentially methionine, from peptides and arylamides.. Cotranslationally removes the N-terminal methionine from nascent proteins. The N-terminal methionine is often cleaved when the second residue in the primary sequence is small and uncharged (Met-Ala-, Cys, Gly, Pro, Ser, Thr, or Val). This is Methionine aminopeptidase 2-2 from Fusarium vanettenii (strain ATCC MYA-4622 / CBS 123669 / FGSC 9596 / NRRL 45880 / 77-13-4) (Fusarium solani subsp. pisi).